A 402-amino-acid polypeptide reads, in one-letter code: Caspase-1 (402 aa).

The region spanning 1–91 (MADKILRAKR…YLAGILELQS (91 aa)) is the CARD domain. Positions 1–118 (MADKILRAKR…PSSSETKEEQ (118 aa)) are excised as a propeptide. A disordered region spans residues 98-125 (FVATEDSKGGHPSSSETKEEQNKEDGTF). The span at 113–123 (ETKEEQNKEDG) shows a compositional bias: basic and acidic residues. Residues His236 and Cys284 contribute to the active site. A propeptide spanning residues 297–314 (SVRDSEEDFLTDAIFEDD) is cleaved from the precursor. Ser301 carries the phosphoserine modification. Arg343 bears the Omega-N-methylarginine mark.

Belongs to the peptidase C14A family. As to quaternary structure, heterotetramer that consists of two anti-parallel arranged heterodimers, each one formed by a 20 kDa (Caspase-1 subunit p20) and a 10 kDa (Caspase-1 subunit p10) subunit. May be a component of the inflammasome, a protein complex which also includes PYCARD, CARD8 and NLRP2 and whose function would be the activation of pro-inflammatory caspases. Component of the AIM2 PANoptosome complex, a multiprotein complex that drives inflammatory cell death (PANoptosis). Both the p10 and p20 subunits interact with MEFV. Interacts with CARD17P/INCA and CARD18. Interacts with SERPINB1; this interaction regulates CASP1 activity. In terms of assembly, heterotetramer that consists of two anti-parallel arranged heterodimers, each one formed by a 20 kDa (Caspase-1 subunit p20) and a 10 kDa (Caspase-1 subunit p10) subunit. Post-translationally, the two subunits are derived from the precursor sequence by an autocatalytic mechanism. In terms of processing, ubiquitinated via 'Lys-11'-linked polyubiquitination. Deubiquitinated by USP8. As to expression, high level expression seen in spleen and lung, low level expression seen in brain, heart, liver, kidney, testis and skeletal muscle.

The protein localises to the cytoplasm. It localises to the cell membrane. It carries out the reaction Strict requirement for an Asp residue at position P1 and has a preferred cleavage sequence of Tyr-Val-Ala-Asp-|-.. Its function is as follows. Thiol protease involved in a variety of inflammatory processes by proteolytically cleaving other proteins, such as the precursors of the inflammatory cytokines interleukin-1 beta (IL1B) and interleukin 18 (IL18) as well as the pyroptosis inducer Gasdermin-D (GSDMD), into active mature peptides. Plays a key role in cell immunity as an inflammatory response initiator: once activated through formation of an inflammasome complex, it initiates a pro-inflammatory response through the cleavage of the two inflammatory cytokines IL1B and IL18, releasing the mature cytokines which are involved in a variety of inflammatory processes. Cleaves a tetrapeptide after an Asp residue at position P1. Also initiates pyroptosis, a programmed lytic cell death pathway, through cleavage of GSDMD. In contrast to cleavage of interleukin IL1B, recognition and cleavage of GSDMD is not strictly dependent on the consensus cleavage site but depends on an exosite interface on CASP1 that recognizes and binds the Gasdermin-D, C-terminal (GSDMD-CT) part. Cleaves and activates CASP7 in response to bacterial infection, promoting plasma membrane repair. Upon inflammasome activation, during DNA virus infection but not RNA virus challenge, controls antiviral immunity through the cleavage of CGAS, rendering it inactive. In apoptotic cells, cleaves SPHK2 which is released from cells and remains enzymatically active extracellularly. The protein is Caspase-1 (Casp1) of Mus musculus (Mouse).